Here is a 199-residue protein sequence, read N- to C-terminus: Thymidine kinase (199 aa).

Residues 15-22 and 88-91 each bind ATP; these read GSMFSGKS and DEVQ. Glu89 acts as the Proton acceptor in catalysis. Zn(2+) is bound by residues Cys145, Cys148, Cys183, and His186.

The protein belongs to the thymidine kinase family. Homotetramer.

The protein localises to the cytoplasm. The catalysed reaction is thymidine + ATP = dTMP + ADP + H(+). In Staphylococcus epidermidis (strain ATCC 12228 / FDA PCI 1200), this protein is Thymidine kinase.